Consider the following 160-residue polypeptide: Cathelin-related peptide SC5 (160 aa).

An N-terminal signal peptide occupies residues 1 to 29 (METQRASLSLGRCSLWLLLLGLALPSASA). Positions 30–131 (QVLSYREAVL…DITCAEPQSV (102 aa)) are excised as a propeptide. Disulfide bonds link C86–C97 and C108–C125.

It belongs to the cathelicidin family.

It is found in the secreted. Functionally, broad spectrum bactericidal agent. In Ovis aries (Sheep), this protein is Cathelin-related peptide SC5.